The sequence spans 1391 residues: MSQKPSFFQKKYSPTATRRYYGKIATDFVQPNLADIQIRSYQTFLDHDLENLIAAYFPIKSPNDRYTINFKGLRRTAPERNEAQSRSESKTYEIGIYADLELIDSATGTIKKPRKSKKNSATSSVDGVFLTNLPLITRDGVFIVNGIEKFVIAQITRSPGIYMLTKSQLKLSSSRKRVQEGYVCEVLPANGSVMLIYISNKKKIEDAFVQILLRDAVREGAKIFPITTLLKAFGMSGKEILKVFKNNEFITRSLEAEVYNAKDFLNNVDPEIKNLLREFRDGKTDLRRKGIASDQKIRSLVSDYVLLEKEHKALSEAKPNDPKVGQLEADMDELMDKIITERAAKHIVHELSISLRGLENTDECPENSYHALLCSRFFRQRRYNLSAAGRYKVSRKLRITERIYQKTLACDLHLKNGELLLKKGTLLVKEEIDKIKQAAQNNQIDFVQKIKLTTDGSAVNLSPESLLYESLDVYVNNDNFDVSVPVVGIHNDNDLNKAITLSDFIASISYVINIPSAIGKYDDIDHLGNKRVKLINELISSRLESGITRMERFLKEKLTIADGVNRGQQINEEGQVIEQAEKKELTIKSLINSKPIQIVIRDFFNTHQLTQFLDHQNPLSELSNKRRISAMGPGGISREDPNLDIRDVHYSQYGRICPIETPEGMNIGLIMSLASFAKIDENGFLMAPYRKIKNGVITDEVEYLTALREDEHIIAEISSLVNIDENNKILDKEIIGRYRSMQGLYDPSKIDYIDVAPHQVVSIGSSLIPFLENDDSARALMGTNMQRQAYPLIKPYAPVVGTGQEYKIARDSGLTMLAPCSGTVKYVDNSKITIESDSGEQHTLDLIKFERSNQNTCYNHVPLVEKGQRVTKDEVIADGPAVNKSELSLGQNVLVAFTTWNGYNYEDAIVISERLVKDDVLTSLTINEYVAQCLSTKNGDEQITRDIPNVSDANKRYLDENGIIMVGAEVKEGDVLVGKVSPKGQVEVSPEEKLFKAIFPESVQNVRDSSLKLPHGGDGIVSCVKRFSIANGNELNDGVIEMIKVYVVQKRKIQIGDKLAGRHGNKGVISKVVPVADMPHLEDGTPVDILLNPLGVPSRMNIGQIFEMHLGYAAHNLAKRMLISACFDDKKAQALSTEINQPQYKLDRLITGLKAQITNRGLKDEQAALAQLNNGDIALVLKEIGMSFDDLHFKVATPIFQGVNFQDLQDIMDEAGLKPAETHGKFKLIDGRTGLPFEKPISLGIMYIMKLNHMVDDKIHARAVGPYSKITQQPLGGKSQNGGQRFGEMEVWALEAYGAAYNLQELLTIKSDDVQGRNKAYAAIVKGAAFPEPGIPESFKLLTKELQGLALSVSFIYDDNTQQDSNNVSILQADGEQDDLFNDFEFDTEGY.

This sequence belongs to the RNA polymerase beta chain family. In terms of assembly, the RNAP catalytic core consists of 2 alpha, 1 beta, 1 beta' and 1 omega subunit. When a sigma factor is associated with the core the holoenzyme is formed, which can initiate transcription.

It catalyses the reaction RNA(n) + a ribonucleoside 5'-triphosphate = RNA(n+1) + diphosphate. In terms of biological role, DNA-dependent RNA polymerase catalyzes the transcription of DNA into RNA using the four ribonucleoside triphosphates as substrates. This Mycoplasma pneumoniae (strain ATCC 29342 / M129 / Subtype 1) (Mycoplasmoides pneumoniae) protein is DNA-directed RNA polymerase subunit beta.